Here is a 476-residue protein sequence, read N- to C-terminus: Bifunctional protein HldE (476 aa).

The segment at 1 to 318 (MFQYSAEFKQ…ENAIHGRSNT (318 aa)) is ribokinase. Residue 195–198 (NMSE) participates in ATP binding. The active site involves Asp264. Residues 344–476 (MTNGCFDILH…VISKIQQLKD (133 aa)) are cytidylyltransferase.

It in the N-terminal section; belongs to the carbohydrate kinase PfkB family. In the C-terminal section; belongs to the cytidylyltransferase family. In terms of assembly, homodimer.

It catalyses the reaction D-glycero-beta-D-manno-heptose 7-phosphate + ATP = D-glycero-beta-D-manno-heptose 1,7-bisphosphate + ADP + H(+). The catalysed reaction is D-glycero-beta-D-manno-heptose 1-phosphate + ATP + H(+) = ADP-D-glycero-beta-D-manno-heptose + diphosphate. The protein operates within nucleotide-sugar biosynthesis; ADP-L-glycero-beta-D-manno-heptose biosynthesis; ADP-L-glycero-beta-D-manno-heptose from D-glycero-beta-D-manno-heptose 7-phosphate: step 1/4. Its pathway is nucleotide-sugar biosynthesis; ADP-L-glycero-beta-D-manno-heptose biosynthesis; ADP-L-glycero-beta-D-manno-heptose from D-glycero-beta-D-manno-heptose 7-phosphate: step 3/4. It functions in the pathway bacterial outer membrane biogenesis; LPS core biosynthesis. Functionally, catalyzes the phosphorylation of D-glycero-D-manno-heptose 7-phosphate at the C-1 position to selectively form D-glycero-beta-D-manno-heptose-1,7-bisphosphate. Catalyzes the ADP transfer from ATP to D-glycero-beta-D-manno-heptose 1-phosphate, yielding ADP-D-glycero-beta-D-manno-heptose. The sequence is that of Bifunctional protein HldE from Pasteurella multocida (strain Pm70).